An 842-amino-acid chain; its full sequence is MAVRPGLWPALLGIVLAAWLRGSGAQQSATVANPVPGANPDLLPHFLVEPEDVYIVKNKPVLLVCKAVPATQIFFKCNGEWVRQVDHVIERSTDGSSGLPTMEVRINVSRQQVEKVFGLEEYWCQCVAWSSSGTTKSQKAYIRIAYLRKNFEQEPLAKEVSLEQGIVLPCRPPEGIPPAEVEWLRNEDLVDPSLDPNVYITREHSLVVRQARLADTANYTCVAKNIVARRRSASAAVIVYVDGSWSPWSKWSACGLDCTHWRSRECSDPAPRNGGEECQGTDLDTRNCTSDLCVHTASGPEDVALYVGLIAVAVCLVLLLLVLILVYCRKKEGLDSDVADSSILTSGFQPVSIKPSKADNPHLLTIQPDLSTTTTTYQGSLCPRQDGPSPKFQLTNGHLLSPLGGGRHTLHHSSPTSEAEEFVSRLSTQNYFRSLPRGTSNMTYGTFNFLGGRLMIPNTGISLLIPPDAIPRGKIYEIYLTLHKPEDVRLPLAGCQTLLSPIVSCGPPGVLLTRPVILAMDHCGEPSPDSWSLRLKKQSCEGSWEDVLHLGEEAPSHLYYCQLEASACYVFTEQLGRFALVGEALSVAAAKRLKLLLFAPVACTSLEYNIRVYCLHDTHDALKEVVQLEKQLGGQLIQEPRVLHFKDSYHNLRLSIHDVPSSLWKSKLLVSYQEIPFYHIWNGTQRYLHCTFTLERVSPSTSDLACKLWVWQVEGDGQSFSINFNITKDTRFAELLALESEAGVPALVGPSAFKIPFLIRQKIISSLDPPCRRGADWRTLAQKLHLDSHLSFFASKPSPTAMILNLWEARHFPNGNLSQLAAAVAGLGQPDAGLFTVSEAEC.

An N-terminal signal peptide occupies residues 1 to 25 (MAVRPGLWPALLGIVLAAWLRGSGA). Over 26–306 (QQSATVANPV…ASGPEDVALY (281 aa)) the chain is Extracellular. Positions 44 to 141 (PHFLVEPEDV…SGTTKSQKAY (98 aa)) constitute an Ig-like domain. Disulfide bonds link Cys65–Cys126, Cys77–Cys124, and Cys170–Cys221. Residues Asn107 and Asn218 are each glycosylated (N-linked (GlcNAc...) asparagine). Positions 155 to 234 (PLAKEVSLEQ…NIVARRRSAS (80 aa)) constitute an Ig-like C2-type domain. Positions 242-294 (DGSWSPWSKWSACGLDCTHWRSRECSDPAPRNGGEECQGTDLDTRNCTSDLCV) constitute a TSP type-1 domain. Residues Trp245, Trp248, and Trp251 are each glycosylated (C-linked (Man) tryptophan). Disulfide bonds link Cys254–Cys288, Cys258–Cys293, and Cys266–Cys278. N-linked (GlcNAc...) asparagine glycosylation occurs at Asn287. The chain crosses the membrane as a helical span at residues 307-327 (VGLIAVAVCLVLLLLVLILVY). Residues 328-842 (CRKKEGLDSD…GLFTVSEAEC (515 aa)) are Cytoplasmic-facing. The 144-residue stretch at 441 to 584 (NMTYGTFNFL…LGRFALVGEA (144 aa)) folds into the ZU5 domain. An interaction with DCC region spans residues 605–623 (SLEYNIRVYCLHDTHDALK). The Death domain occupies 761 to 841 (QKIISSLDPP…AGLFTVSEAE (81 aa)).

Belongs to the unc-5 family. Homodimer and homooligomer. Interacts with the cytoplasmic part of DCC. Interacts with MAGED1. Interacts with PRKCABP, possibly mediating some interaction with PKC. Interacts (via extracellular domain) with FLRT2 (via extracellular domain). Interacts (via extracellular domain) with FLRT3 (via extracellular domain). Post-translationally, phosphorylated on cytoplasmic tyrosine residues. Phosphorylated by PKC in vitro. Proteolytically cleaved by caspases during apoptosis. The cleavage does not take place when the receptor is associated with netrin ligand. Its cleavage by caspases is required to induce apoptosis. In terms of processing, the two extracellular TSRs of UNC5A contain WxxWxxWxxC motifs that can be C-mannosylated on all tryptophans. DPY19L1 preferentially mannosylates the first two tryptophans and DPY19L3 prefers the third. C-mannosylation by DPY19L1 is required for transport of UNC5A from the endoplasmic reticulum to the cell surface.

It localises to the cell membrane. It is found in the membrane raft. The protein localises to the cell projection. The protein resides in the neuron projection. Receptor for netrin required for axon guidance. Functions in the netrin signaling pathway and promotes neurite outgrowth in response to NTN1. Mediates axon repulsion of neuronal growth cones in the developing nervous system in response to netrin. Axon repulsion in growth cones may be mediated by its association with DCC that may trigger signaling for repulsion. It also acts as a dependence receptor required for apoptosis induction when not associated with netrin ligand. The protein is Netrin receptor UNC5A (UNC5A) of Homo sapiens (Human).